The sequence spans 565 residues: Dihydroxy-acid dehydratase (565 aa).

Position 53 (cysteine 53) interacts with [2Fe-2S] cluster. Aspartate 85 lines the Mg(2+) pocket. A [2Fe-2S] cluster-binding site is contributed by cysteine 126. Positions 127 and 128 each coordinate Mg(2+). Lysine 128 carries the post-translational modification N6-carboxylysine. Cysteine 198 serves as a coordination point for [2Fe-2S] cluster. Glutamate 450 serves as a coordination point for Mg(2+). Serine 476 serves as the catalytic Proton acceptor.

The protein belongs to the IlvD/Edd family. As to quaternary structure, homodimer. [2Fe-2S] cluster serves as cofactor. It depends on Mg(2+) as a cofactor.

It carries out the reaction (2R)-2,3-dihydroxy-3-methylbutanoate = 3-methyl-2-oxobutanoate + H2O. The enzyme catalyses (2R,3R)-2,3-dihydroxy-3-methylpentanoate = (S)-3-methyl-2-oxopentanoate + H2O. It participates in amino-acid biosynthesis; L-isoleucine biosynthesis; L-isoleucine from 2-oxobutanoate: step 3/4. The protein operates within amino-acid biosynthesis; L-valine biosynthesis; L-valine from pyruvate: step 3/4. Functions in the biosynthesis of branched-chain amino acids. Catalyzes the dehydration of (2R,3R)-2,3-dihydroxy-3-methylpentanoate (2,3-dihydroxy-3-methylvalerate) into 2-oxo-3-methylpentanoate (2-oxo-3-methylvalerate) and of (2R)-2,3-dihydroxy-3-methylbutanoate (2,3-dihydroxyisovalerate) into 2-oxo-3-methylbutanoate (2-oxoisovalerate), the penultimate precursor to L-isoleucine and L-valine, respectively. The polypeptide is Dihydroxy-acid dehydratase (Synechococcus sp. (strain JA-2-3B'a(2-13)) (Cyanobacteria bacterium Yellowstone B-Prime)).